Reading from the N-terminus, the 479-residue chain is ATP synthase subunit beta, chloroplastic (479 aa).

Position 156 to 163 (156 to 163 (GGAGVGKT)) interacts with ATP.

Belongs to the ATPase alpha/beta chains family. As to quaternary structure, F-type ATPases have 2 components, CF(1) - the catalytic core - and CF(0) - the membrane proton channel. CF(1) has five subunits: alpha(3), beta(3), gamma(1), delta(1), epsilon(1). CF(0) has four main subunits: a(1), b(1), b'(1) and c(9-12).

The protein resides in the plastid. Its subcellular location is the chloroplast thylakoid membrane. It carries out the reaction ATP + H2O + 4 H(+)(in) = ADP + phosphate + 5 H(+)(out). Functionally, produces ATP from ADP in the presence of a proton gradient across the membrane. The catalytic sites are hosted primarily by the beta subunits. In Trichomanes davallioides (Kilau fern), this protein is ATP synthase subunit beta, chloroplastic.